The following is a 514-amino-acid chain: 3-octaprenyl-4-hydroxybenzoate carboxy-lyase (514 aa).

Asparagine 177 lines the Mn(2+) pocket. Prenylated FMN-binding positions include 180 to 182 (IYR), 194 to 196 (RWL), and 199 to 200 (RG). Residue glutamate 243 participates in Mn(2+) binding. Residue aspartate 314 is the Proton donor of the active site.

The protein belongs to the UbiD family. As to quaternary structure, homohexamer. It depends on prenylated FMN as a cofactor. Mn(2+) is required as a cofactor.

It localises to the cell membrane. It catalyses the reaction a 4-hydroxy-3-(all-trans-polyprenyl)benzoate + H(+) = a 2-(all-trans-polyprenyl)phenol + CO2. It participates in cofactor biosynthesis; ubiquinone biosynthesis. Functionally, catalyzes the decarboxylation of 3-octaprenyl-4-hydroxy benzoate to 2-octaprenylphenol, an intermediate step in ubiquinone biosynthesis. This is 3-octaprenyl-4-hydroxybenzoate carboxy-lyase from Bordetella petrii (strain ATCC BAA-461 / DSM 12804 / CCUG 43448).